Here is a 128-residue protein sequence, read N- to C-terminus: Fluoride-specific ion channel FluC (128 aa).

The next 4 membrane-spanning stretches (helical) occupy residues 5–25 (LFIS…GLLF), 34–54 (FGAL…LGLF), 67–87 (FLIT…SEVV), and 99–119 (FCVL…GIWI). The Na(+) site is built by glycine 74 and threonine 77.

The protein belongs to the fluoride channel Fluc/FEX (TC 1.A.43) family.

It is found in the cell inner membrane. The catalysed reaction is fluoride(in) = fluoride(out). With respect to regulation, na(+) is not transported, but it plays an essential structural role and its presence is essential for fluoride channel function. Fluoride-specific ion channel. Important for reducing fluoride concentration in the cell, thus reducing its toxicity. In Haemophilus influenzae (strain PittEE), this protein is Fluoride-specific ion channel FluC.